The primary structure comprises 357 residues: Protein pelota homolog (357 aa).

It belongs to the eukaryotic release factor 1 family. Pelota subfamily. As to quaternary structure, monomer. The cofactor is a divalent metal cation.

The protein resides in the cytoplasm. In terms of biological role, may function in recognizing stalled ribosomes, interact with stem-loop structures in stalled mRNA molecules, and effect endonucleolytic cleavage of the mRNA. May play a role in the release non-functional ribosomes and degradation of damaged mRNAs. Has endoribonuclease activity. The polypeptide is Protein pelota homolog (Thermococcus gammatolerans (strain DSM 15229 / JCM 11827 / EJ3)).